Here is a 474-residue protein sequence, read N- to C-terminus: Cysteine--tRNA ligase (474 aa).

Cys28 contributes to the Zn(2+) binding site. Residues 30–40 (ITVYDLCHLGH) carry the 'HIGH' region motif. Residues Cys209, His234, and Glu238 each coordinate Zn(2+). The 'KMSKS' region motif lies at 269–273 (KMSKS). Residue Lys272 coordinates ATP.

The protein belongs to the class-I aminoacyl-tRNA synthetase family. As to quaternary structure, monomer. Zn(2+) serves as cofactor.

The protein resides in the cytoplasm. It catalyses the reaction tRNA(Cys) + L-cysteine + ATP = L-cysteinyl-tRNA(Cys) + AMP + diphosphate. The sequence is that of Cysteine--tRNA ligase from Blochmanniella floridana.